Here is a 381-residue protein sequence, read N- to C-terminus: Guanine nucleotide-binding protein subunit alpha-12 (381 aa).

Cys11 is lipidated: S-palmitoyl cysteine. Residues 56–381 form the G-alpha domain; it reads RLVKILLLGA…QENLKDIMLQ (326 aa). Positions 59–72 are G1 motif; the sequence is KILLLGAGESGKST. Residues 67–72 and 202–205 each bind GTP; these read ESGKST and LLAR. Ser71 is a binding site for Mg(2+). Positions 200 to 208 are G2 motif; sequence DILLARKAT. Thr208 is a Mg(2+) binding site. Thr208 carries the phosphothreonine modification. The interval 223–232 is G3 motif; the sequence is FKMVDVGGQR. The segment at 292–299 is G4 motif; the sequence is ILFLNKMD. GTP contacts are provided by residues 296–299 and Ala353; that span reads NKMD. Residues 351-356 are G5 motif; sequence TTAIDT.

The protein belongs to the G-alpha family. G(12) subfamily. As to quaternary structure, g proteins are composed of 3 units; alpha, beta and gamma. The alpha chain contains the guanine nucleotide binding site. Interacts with UBXD5. Interacts (in GTP-bound form) with PPP5C (via TPR repeats); activates PPP5C phosphatase activity and translocates PPP5C to the cell membrane. Interacts with RGS22. Interacts (via N-terminus) with NAPA; the interaction promotes CDH5 localization to plasma membrane. Interacts with CTNND1 (via N-terminus); the interaction regulates CDH1-mediated cell-cell adhesion. Interacts with PPP2R1A; the interaction promotes protein phosphatase 2A activation causing dephosphorylation of MAPT. Interacts (in GTP-bound form) with ARHGEF1. Interacts (in GTP-bound form) with ARHGEF11 (via RGS domain). Interacts (in GTP-bound form) with ARHGEF12 (via RGS domain).

Its subcellular location is the cell membrane. The protein localises to the lateral cell membrane. It is found in the cytoplasm. In terms of biological role, guanine nucleotide-binding proteins (G proteins) are involved as modulators or transducers in various transmembrane signaling systems. Activates effector molecule RhoA by binding and activating RhoGEFs (ARHGEF12/LARG). GNA12-dependent Rho signaling subsequently regulates transcription factor AP-1 (activating protein-1). GNA12-dependent Rho signaling also regulates protein phosphatese 2A activation causing dephosphorylation of its target proteins. Promotes tumor cell invasion and metastasis by activating RhoA/ROCK signaling pathway and up-regulating pro-inflammatory cytokine production. Inhibits CDH1-mediated cell adhesion in process independent from Rho activation. Together with NAPA promotes CDH5 localization to plasma membrane. May play a role in the control of cell migration through the TOR signaling cascade. This Homo sapiens (Human) protein is Guanine nucleotide-binding protein subunit alpha-12 (GNA12).